Here is a 373-residue protein sequence, read N- to C-terminus: tRNA-specific 2-thiouridylase MnmA (373 aa).

ATP contacts are provided by residues 12–19 and methionine 38; that span reads GMSGGVDS. The interval 98–100 is interaction with target base in tRNA; that stretch reads NPD. Cysteine 103 (nucleophile) is an active-site residue. Cysteine 103 and cysteine 200 are disulfide-bonded. Glycine 127 is an ATP binding site. The tract at residues 150–152 is interaction with tRNA; sequence KDQ. Cysteine 200 serves as the catalytic Cysteine persulfide intermediate. Positions 312-313 are interaction with tRNA; it reads RY.

Belongs to the MnmA/TRMU family.

The protein localises to the cytoplasm. The catalysed reaction is S-sulfanyl-L-cysteinyl-[protein] + uridine(34) in tRNA + AH2 + ATP = 2-thiouridine(34) in tRNA + L-cysteinyl-[protein] + A + AMP + diphosphate + H(+). Functionally, catalyzes the 2-thiolation of uridine at the wobble position (U34) of tRNA, leading to the formation of s(2)U34. In Streptococcus pyogenes serotype M3 (strain SSI-1), this protein is tRNA-specific 2-thiouridylase MnmA.